Here is a 323-residue protein sequence, read N- to C-terminus: Beta-ketoacyl-[acyl-carrier-protein] synthase III (323 aa).

Residues C113 and H250 contribute to the active site. The segment at 251-255 (QANKR) is ACP-binding. N280 is a catalytic residue.

Belongs to the thiolase-like superfamily. FabH family. In terms of assembly, homodimer.

Its subcellular location is the cytoplasm. The catalysed reaction is malonyl-[ACP] + acetyl-CoA + H(+) = 3-oxobutanoyl-[ACP] + CO2 + CoA. Its pathway is lipid metabolism; fatty acid biosynthesis. Catalyzes the condensation reaction of fatty acid synthesis by the addition to an acyl acceptor of two carbons from malonyl-ACP. Catalyzes the first condensation reaction which initiates fatty acid synthesis and may therefore play a role in governing the total rate of fatty acid production. Possesses both acetoacetyl-ACP synthase and acetyl transacylase activities. Its substrate specificity determines the biosynthesis of branched-chain and/or straight-chain of fatty acids. The chain is Beta-ketoacyl-[acyl-carrier-protein] synthase III from Brucella abortus biovar 1 (strain 9-941).